The following is a 307-amino-acid chain: Transcriptional repressor scratch 2 (307 aa).

Residues 1–20 are SNAG domain; the sequence is MPRSFLVKKIKGDGFQCSGV. 2 disordered regions span residues 34–90 and 116–148; these read LPGA…PQSS and GRSR…AGAQ. The segment covering 124-148 has biased composition (gly residues); it reads GGGGDAGGSGDAGGAGGRAGRAGAQ. 4 C2H2-type zinc fingers span residues 155-177, 186-208, 212-234, and 240-262; these read HACA…KQTH, RKCP…LLTH, HKCG…MRSH, and FGCA…MQTH. The C2H2-type 5; atypical zinc finger occupies 268 to 291; the sequence is YRCRQCDKSFALKSYLHKHCEAAC.

The protein belongs to the snail C2H2-type zinc-finger protein family.

It is found in the nucleus. Functionally, may be involved in transcriptional regulation. This chain is Transcriptional repressor scratch 2 (SCRT2), found in Homo sapiens (Human).